A 498-amino-acid polypeptide reads, in one-letter code: Glycerol kinase (498 aa).

T12 contributes to the ADP binding site. T12, T13, and S14 together coordinate ATP. T12 contacts sn-glycerol 3-phosphate. ADP is bound at residue R16. Sn-glycerol 3-phosphate is bound by residues R82, E83, and Y134. The glycerol site is built by R82, E83, and Y134. H230 carries the post-translational modification Phosphohistidine; by HPr. D244 is a sn-glycerol 3-phosphate binding site. D244 and Q245 together coordinate glycerol. The ADP site is built by T266 and G309. T266, G309, Q313, and G410 together coordinate ATP. Residues G410 and N414 each contribute to the ADP site.

It belongs to the FGGY kinase family. Homotetramer and homodimer (in equilibrium). The phosphoenolpyruvate-dependent sugar phosphotransferase system (PTS), including enzyme I, and histidine-containing protein (HPr) are required for the phosphorylation, which leads to the activation of the enzyme.

It catalyses the reaction glycerol + ATP = sn-glycerol 3-phosphate + ADP + H(+). Its pathway is polyol metabolism; glycerol degradation via glycerol kinase pathway; sn-glycerol 3-phosphate from glycerol: step 1/1. Activated by phosphorylation and inhibited by fructose 1,6-bisphosphate (FBP). Functionally, key enzyme in the regulation of glycerol uptake and metabolism. Catalyzes the phosphorylation of glycerol to yield sn-glycerol 3-phosphate. The protein is Glycerol kinase of Staphylococcus aureus (strain MW2).